The following is a 136-amino-acid chain: Histone H3 (136 aa).

The tract at residues 1–43 is disordered; it reads MARTKQTARKSTGAKAPRKQLASKAARKSAPATGGIKKPHRFR. N6,N6,N6-trimethyllysine; alternate occurs at positions 5 and 10. K5 is modified (N6,N6-dimethyllysine; alternate). Residues K5 and K10 each carry the N6-acetyllysine; alternate modification. An N6-methyllysine; alternate modification is found at K5. S11 carries the post-translational modification Phosphoserine. N6-acetyllysine is present on residues K15, K19, and K24. N6,N6,N6-trimethyllysine; alternate occurs at positions 28 and 37. An N6,N6-dimethyllysine; alternate mark is found at K28 and K37. N6-acetyllysine; alternate occurs at positions 28, 37, and 57. N6-methyllysine; alternate occurs at positions 28, 37, and 57. N6-methyllysine is present on K80.

This sequence belongs to the histone H3 family. The nucleosome is a histone octamer containing two molecules each of H2A, H2B, H3 and H4 assembled in one H3-H4 heterotetramer and two H2A-H2B heterodimers. The octamer wraps approximately 147 bp of DNA. Phosphorylated to form H3S10ph. H3S10ph promotes subsequent H3K14ac formation by GCN5. H3S10ph is only found in the mitotically dividing MIC, but not in the amitotically dividing MAC. H3S10ph is correlated with chromosome condensation during mitotic or meiotic micronuclear divisions. In terms of processing, acetylation of histone H3 leads to transcriptional activation. H3K14ac formation by GCN5 is promoted by H3S10ph. H3K9acK14ac is the preferred acetylated form of newly synthesized H3. Acetylation occurs almost exclusively in the MAC. Post-translationally, methylated to form H3K4me. H3K4me is only found in the transcriptionally active MAC. Methylated to form H3K9me in developing MACs during conjugation, when genome-wide DNA elimination occurs. At this stage, H3K9me specifically occurs on DNA sequences being eliminated (IES), probably targeted by small scan RNAs (scnRNAs) bound to IES, and is required for efficient IES elimination. H3K9me is required for the interaction with the chromodomains of PDD1 and PDD3. The full-length protein H3S (slow migrating) is converted to H3F (fast migrating) by proteolytic removal of the first 6 residues. H3F is unique to MIC, and processing seems to occur regularly each generation at a specific point in the cell cycle.

The protein resides in the nucleus. It is found in the chromosome. Functionally, core component of nucleosome. Nucleosomes wrap and compact DNA into chromatin, limiting DNA accessibility to the cellular machineries which require DNA as a template. Histones thereby play a central role in transcription regulation, DNA repair, DNA replication and chromosomal stability. DNA accessibility is regulated via a complex set of post-translational modifications of histones, also called histone code, and nucleosome remodeling. This is Histone H3 from Tetrahymena pyriformis.